Here is a 525-residue protein sequence, read N- to C-terminus: Asparagine synthetase [glutamine-hydrolyzing] (525 aa).

The active-site For GATase activity is the Cys-2. Residues Cys-2–Gly-185 form the Glutamine amidotransferase type-2 domain. Residues Arg-50–Ile-54, Asn-75–Glu-77, and Asp-98 contribute to the L-glutamine site. The Asparagine synthetase domain maps to Pro-193 to Cys-517. Residues Leu-231, Val-267, and Ser-341–Gly-342 each bind ATP.

It carries out the reaction L-aspartate + L-glutamine + ATP + H2O = L-asparagine + L-glutamate + AMP + diphosphate + H(+). It functions in the pathway amino-acid biosynthesis; L-asparagine biosynthesis; L-asparagine from L-aspartate (L-Gln route): step 1/1. In terms of biological role, could play a role in remobilization of nitrogen in flowers during senescence. This is Asparagine synthetase [glutamine-hydrolyzing] (AND1) from Sandersonia aurantiaca (Christmas-bells).